The sequence spans 399 residues: Tryptophan synthase beta chain (399 aa).

K92 bears the N6-(pyridoxal phosphate)lysine mark.

This sequence belongs to the TrpB family. As to quaternary structure, tetramer of two alpha and two beta chains. Pyridoxal 5'-phosphate is required as a cofactor.

It catalyses the reaction (1S,2R)-1-C-(indol-3-yl)glycerol 3-phosphate + L-serine = D-glyceraldehyde 3-phosphate + L-tryptophan + H2O. The protein operates within amino-acid biosynthesis; L-tryptophan biosynthesis; L-tryptophan from chorismate: step 5/5. In terms of biological role, the beta subunit is responsible for the synthesis of L-tryptophan from indole and L-serine. The sequence is that of Tryptophan synthase beta chain from Bordetella bronchiseptica (strain ATCC BAA-588 / NCTC 13252 / RB50) (Alcaligenes bronchisepticus).